A 641-amino-acid polypeptide reads, in one-letter code: Probable potassium transport system protein Kup (641 aa).

12 helical membrane-spanning segments follow: residues 29 to 49 (ISLA…LYAI), 66 to 86 (ILGV…LKYL), 119 to 139 (WVLV…AMIT), 156 to 176 (PAFA…LFLF), 185 to 205 (GALF…LGII), 231 to 251 (LHGF…EALY), 266 to 286 (WVLF…AFLL), 298 to 318 (ALVP…ATVI), 356 to 376 (IYVP…VLGF), 384 to 404 (AAYG…FFFV), 415 to 435 (VLWA…GASM), and 438 to 458 (LFHG…LMNT).

Belongs to the HAK/KUP transporter (TC 2.A.72) family.

The protein resides in the cell inner membrane. It carries out the reaction K(+)(in) + H(+)(in) = K(+)(out) + H(+)(out). Its function is as follows. Transport of potassium into the cell. Likely operates as a K(+):H(+) symporter. The protein is Probable potassium transport system protein Kup of Chlorobium phaeovibrioides (strain DSM 265 / 1930) (Prosthecochloris vibrioformis (strain DSM 265)).